The chain runs to 203 residues: Holliday junction branch migration complex subunit RuvA (203 aa).

A domain I region spans residues 1–64 (MIGRLRGYIL…EDAQLLYGFN (64 aa)). Residues 65 to 142 (DKQERALFRE…KGLNGDLFNN (78 aa)) form a domain II region. Residues 143–154 (SSEITLPTAAQA) are flexible linker. The segment at 155–203 (AELDAEAEAASALVALGYKPQEASRMVSKIAKPGADCETLIRDALRAAL) is domain III.

This sequence belongs to the RuvA family. As to quaternary structure, homotetramer. Forms an RuvA(8)-RuvB(12)-Holliday junction (HJ) complex. HJ DNA is sandwiched between 2 RuvA tetramers; dsDNA enters through RuvA and exits via RuvB. An RuvB hexamer assembles on each DNA strand where it exits the tetramer. Each RuvB hexamer is contacted by two RuvA subunits (via domain III) on 2 adjacent RuvB subunits; this complex drives branch migration. In the full resolvosome a probable DNA-RuvA(4)-RuvB(12)-RuvC(2) complex forms which resolves the HJ.

It is found in the cytoplasm. Functionally, the RuvA-RuvB-RuvC complex processes Holliday junction (HJ) DNA during genetic recombination and DNA repair, while the RuvA-RuvB complex plays an important role in the rescue of blocked DNA replication forks via replication fork reversal (RFR). RuvA specifically binds to HJ cruciform DNA, conferring on it an open structure. The RuvB hexamer acts as an ATP-dependent pump, pulling dsDNA into and through the RuvAB complex. HJ branch migration allows RuvC to scan DNA until it finds its consensus sequence, where it cleaves and resolves the cruciform DNA. The polypeptide is Holliday junction branch migration complex subunit RuvA (Serratia proteamaculans (strain 568)).